The following is a 188-amino-acid chain: Crossover junction endodeoxyribonuclease RuvC (188 aa).

Catalysis depends on residues Asp-7, Glu-68, and Asp-141. Positions 7, 68, and 141 each coordinate Mg(2+).

Belongs to the RuvC family. Homodimer which binds Holliday junction (HJ) DNA. The HJ becomes 2-fold symmetrical on binding to RuvC with unstacked arms; it has a different conformation from HJ DNA in complex with RuvA. In the full resolvosome a probable DNA-RuvA(4)-RuvB(12)-RuvC(2) complex forms which resolves the HJ. The cofactor is Mg(2+).

The protein resides in the cytoplasm. The catalysed reaction is Endonucleolytic cleavage at a junction such as a reciprocal single-stranded crossover between two homologous DNA duplexes (Holliday junction).. Functionally, the RuvA-RuvB-RuvC complex processes Holliday junction (HJ) DNA during genetic recombination and DNA repair. Endonuclease that resolves HJ intermediates. Cleaves cruciform DNA by making single-stranded nicks across the HJ at symmetrical positions within the homologous arms, yielding a 5'-phosphate and a 3'-hydroxyl group; requires a central core of homology in the junction. The consensus cleavage sequence is 5'-(A/T)TT(C/G)-3'. Cleavage occurs on the 3'-side of the TT dinucleotide at the point of strand exchange. HJ branch migration catalyzed by RuvA-RuvB allows RuvC to scan DNA until it finds its consensus sequence, where it cleaves and resolves the cruciform DNA. The polypeptide is Crossover junction endodeoxyribonuclease RuvC (Mycobacterium leprae (strain TN)).